The sequence spans 526 residues: Probable lipid II flippase MurJ (526 aa).

14 helical membrane passes run 35 to 55, 58 to 78, 96 to 116, 137 to 157, 160 to 180, 190 to 210, 235 to 255, 281 to 301, 313 to 333, 362 to 382, 391 to 411, 415 to 435, 459 to 479, and 489 to 509; these read LMGT…PNLF, LFAE…HYSM, AIFT…ILGA, MFPY…LHSI, FVPS…SMYF, IAAA…QLIF, IIAL…NDLV, LLGI…SFHV, LITA…FVLF, WHSV…AFYA, IAGT…FIPL, GIAF…WMFL, LFSV…AYFF, and GVPL…LLLL.

The protein belongs to the MurJ/MviN family.

The protein resides in the cell inner membrane. The protein operates within cell wall biogenesis; peptidoglycan biosynthesis. In terms of biological role, involved in peptidoglycan biosynthesis. Transports lipid-linked peptidoglycan precursors from the inner to the outer leaflet of the cytoplasmic membrane. The chain is Probable lipid II flippase MurJ from Treponema pallidum (strain Nichols).